We begin with the raw amino-acid sequence, 134 residues long: Small ribosomal subunit protein uS11 (134 aa).

This sequence belongs to the universal ribosomal protein uS11 family. Part of the 30S ribosomal subunit. Interacts with proteins S7 and S18. Binds to IF-3.

Functionally, located on the platform of the 30S subunit, it bridges several disparate RNA helices of the 16S rRNA. Forms part of the Shine-Dalgarno cleft in the 70S ribosome. The polypeptide is Small ribosomal subunit protein uS11 (Variovorax paradoxus (strain S110)).